Here is a 196-residue protein sequence, read N- to C-terminus: Orotate phosphoribosyltransferase (196 aa).

5-phospho-alpha-D-ribose 1-diphosphate is bound at residue 117-125 (EDIVTTGLS). Thr-121 and Arg-149 together coordinate orotate.

It belongs to the purine/pyrimidine phosphoribosyltransferase family. PyrE subfamily. Homodimer. Requires Mg(2+) as cofactor.

It carries out the reaction orotidine 5'-phosphate + diphosphate = orotate + 5-phospho-alpha-D-ribose 1-diphosphate. It functions in the pathway pyrimidine metabolism; UMP biosynthesis via de novo pathway; UMP from orotate: step 1/2. Its function is as follows. Catalyzes the transfer of a ribosyl phosphate group from 5-phosphoribose 1-diphosphate to orotate, leading to the formation of orotidine monophosphate (OMP). This is Orotate phosphoribosyltransferase from Methylorubrum populi (strain ATCC BAA-705 / NCIMB 13946 / BJ001) (Methylobacterium populi).